A 259-amino-acid chain; its full sequence is Phosphate import ATP-binding protein PstB (259 aa).

Residues Gly-2–Glu-248 enclose the ABC transporter domain. Gly-37–Ser-44 is a binding site for ATP.

Belongs to the ABC transporter superfamily. Phosphate importer (TC 3.A.1.7) family. As to quaternary structure, the complex is composed of two ATP-binding proteins (PstB), two transmembrane proteins (PstC and PstA) and a solute-binding protein (PstS).

It is found in the cell membrane. The catalysed reaction is phosphate(out) + ATP + H2O = ADP + 2 phosphate(in) + H(+). In terms of biological role, part of the ABC transporter complex PstSACB involved in phosphate import. Responsible for energy coupling to the transport system. This Bifidobacterium longum (strain NCC 2705) protein is Phosphate import ATP-binding protein PstB.